A 116-amino-acid chain; its full sequence is Large ribosomal subunit protein bL20 (116 aa).

Belongs to the bacterial ribosomal protein bL20 family.

In terms of biological role, binds directly to 23S ribosomal RNA and is necessary for the in vitro assembly process of the 50S ribosomal subunit. It is not involved in the protein synthesizing functions of that subunit. This chain is Large ribosomal subunit protein bL20, found in Synechococcus elongatus (strain ATCC 33912 / PCC 7942 / FACHB-805) (Anacystis nidulans R2).